Here is a 176-residue protein sequence, read N- to C-terminus: Disulfide bond formation protein B (176 aa).

The Cytoplasmic portion of the chain corresponds to 1 to 14 (MLRFLNQCSQGRGA). A helical membrane pass occupies residues 15–31 (WLLMAFTALALELTALW). The Periplasmic portion of the chain corresponds to 32–49 (FQHVMLLKPCVLCIYERC). A disulfide bond links Cys41 and Cys44. Residues 50-65 (ALFGVLGAALIGAIAP) traverse the membrane as a helical segment. At 66–71 (KTPLRY) the chain is on the cytoplasmic side. A helical membrane pass occupies residues 72-89 (VAMVIWLYSAFRGVQLTY). Residues 90–144 (EHTMLQLYPSPFATCDFMARFPEWLPLDKWVPQVFVASGDCAERQWEFLGLEMPQ) lie on the Periplasmic side of the membrane. Cys104 and Cys130 are oxidised to a cystine. The helical transmembrane segment at 145–163 (WLLGIFIAYLIVAVLVVIS) threads the bilayer. Topologically, residues 164-176 (QPFKAKKRDLFGR) are cytoplasmic.

This sequence belongs to the DsbB family.

The protein localises to the cell inner membrane. Functionally, required for disulfide bond formation in some periplasmic proteins. Acts by oxidizing the DsbA protein. This Escherichia coli O1:K1 / APEC protein is Disulfide bond formation protein B.